The primary structure comprises 156 residues: MNINATLIGQSVAFFIFVLFCMKFVWPPVIAALQERQKKIADGLDAANRAARDLELAHEKAGQQLREAKAQAAEIVEQAKKRANQIVDEARDQARTEGERLKAQAQAEIEQELNSVKDALRAQVGALAVTGAEKILGASIDANAHEQLVSKLAAEI.

A helical membrane pass occupies residues 12–32; sequence VAFFIFVLFCMKFVWPPVIAA.

Belongs to the ATPase B chain family. F-type ATPases have 2 components, F(1) - the catalytic core - and F(0) - the membrane proton channel. F(1) has five subunits: alpha(3), beta(3), gamma(1), delta(1), epsilon(1). F(0) has three main subunits: a(1), b(2) and c(10-14). The alpha and beta chains form an alternating ring which encloses part of the gamma chain. F(1) is attached to F(0) by a central stalk formed by the gamma and epsilon chains, while a peripheral stalk is formed by the delta and b chains.

It localises to the cell inner membrane. In terms of biological role, f(1)F(0) ATP synthase produces ATP from ADP in the presence of a proton or sodium gradient. F-type ATPases consist of two structural domains, F(1) containing the extramembraneous catalytic core and F(0) containing the membrane proton channel, linked together by a central stalk and a peripheral stalk. During catalysis, ATP synthesis in the catalytic domain of F(1) is coupled via a rotary mechanism of the central stalk subunits to proton translocation. Functionally, component of the F(0) channel, it forms part of the peripheral stalk, linking F(1) to F(0). The polypeptide is ATP synthase subunit b (Pseudomonas aeruginosa (strain UCBPP-PA14)).